The following is a 160-amino-acid chain: Baculoviral IAP repeat-containing protein 5.1-A (160 aa).

One copy of the BIR repeat lies at 27 to 97; it reads RLATFADWPF…KRSANCGFLS (71 aa). Position 43 is a phosphothreonine; by CDK1 (T43). Positions 66, 69, 86, and 93 each coordinate Zn(2+).

This sequence belongs to the IAP family. In terms of assembly, component of the CPC at least composed of survivin/birc5, incenp, cdca8/borealin and/or cdca9/dasra-A, and aurkb/aurora-B. Interacts directly with incenp (via N-terminus), and may weakly interact with aurkb (via N-terminus) to stabilize the complex. Interacts with GTP-bound ran in both the S and M phases of the cell cycle. Also found in a complex with ubiquitin-mediated signaling proteins including at least usp9x/xFAM, nploc4/npl4 and ufd1. Post-translationally, ubiquitination is required for centrosome-targeting.

The protein resides in the cytoplasm. It localises to the nucleus. Its subcellular location is the chromosome. The protein localises to the centromere. It is found in the cytoskeleton. The protein resides in the spindle. Component of the chromosomal passenger complex (CPC), a complex that acts as a key regulator of mitosis. The CPC complex has essential functions at the centromere in ensuring correct chromosome alignment and segregation and is required for chromatin-induced microtubule stabilization and spindle assembly. Stimulates the mitotic kinase activity of aurkb/aurora-B in the CPC. Does not appear to exhibit anti-apoptotic activity. The protein is Baculoviral IAP repeat-containing protein 5.1-A (birc5.1-a) of Xenopus laevis (African clawed frog).